Here is a 108-residue protein sequence, read N- to C-terminus: Complement inhibitor CirpT2 (108 aa).

The signal sequence occupies residues 1 to 19 (MRTLVASLCVFAVFSAVCC). 4 cysteine pairs are disulfide-bonded: cysteine 40–cysteine 64, cysteine 59–cysteine 98, cysteine 76–cysteine 99, and cysteine 85–cysteine 104.

The protein belongs to the CirpT family. In terms of tissue distribution, expressed in salivary glands.

The protein resides in the secreted. Its function is as follows. Complement inhibitor. Prevents complement-mediated activation of C5 by sterically preventing direct binding of C5 to its convertase (binding with domains MG4 and MG5). Binds C5 at a different binding site than the other tick complement inhibitors OmCI and RaCI3, and the drug eculizumab. Inhibits the complement in human, rat and guinea pig, and also shows a reduced inhibition in rabbit and pig. The sequence is that of Complement inhibitor CirpT2 from Dermacentor andersoni (Rocky mountain wood tick).